The sequence spans 276 residues: NAD-capped RNA hydrolase NudC (276 aa).

R82 is a binding site for substrate. Zn(2+)-binding residues include C112 and C115. E125 lines the substrate pocket. Residues C130 and C133 each coordinate Zn(2+). Substrate is bound at residue Y138. The region spanning 139 to 262 is the Nudix hydrolase domain; sequence PRISPSMIVL…SIARYLIDLY (124 aa). Residues A172, E188, and E192 each contribute to the a divalent metal cation site. Residues 173-194 carry the Nudix box motif; that stretch reads GFAEPGESAEDCLVREVREEVA. Residue 206–213 coordinates substrate; the sequence is QCWPFPHS. A divalent metal cation is bound at residue E233. A255 contacts substrate.

The protein belongs to the Nudix hydrolase family. NudC subfamily. As to quaternary structure, homodimer. Requires Mg(2+) as cofactor. Mn(2+) serves as cofactor. Zn(2+) is required as a cofactor.

It catalyses the reaction a 5'-end NAD(+)-phospho-ribonucleoside in mRNA + H2O = a 5'-end phospho-adenosine-phospho-ribonucleoside in mRNA + beta-nicotinamide D-ribonucleotide + 2 H(+). It carries out the reaction NAD(+) + H2O = beta-nicotinamide D-ribonucleotide + AMP + 2 H(+). The enzyme catalyses NADH + H2O = reduced beta-nicotinamide D-ribonucleotide + AMP + 2 H(+). Its function is as follows. mRNA decapping enzyme that specifically removes the nicotinamide adenine dinucleotide (NAD) cap from a subset of mRNAs by hydrolyzing the diphosphate linkage to produce nicotinamide mononucleotide (NMN) and 5' monophosphate mRNA. The NAD-cap is present at the 5'-end of some mRNAs and stabilizes RNA against 5'-processing. Has preference for mRNAs with a 5'-end purine. Catalyzes the hydrolysis of a broad range of dinucleotide pyrophosphates. The sequence is that of NAD-capped RNA hydrolase NudC from Pseudomonas putida (strain ATCC 700007 / DSM 6899 / JCM 31910 / BCRC 17059 / LMG 24140 / F1).